A 493-amino-acid polypeptide reads, in one-letter code: 3-octaprenyl-4-hydroxybenzoate carboxy-lyase (493 aa).

Position 172 (asparagine 172) interacts with Mn(2+). Residues 175–177 (IYR), 189–191 (RWL), and 194–195 (RG) contribute to the prenylated FMN site. Residue glutamate 238 participates in Mn(2+) binding. Residue aspartate 287 is the Proton donor of the active site.

This sequence belongs to the UbiD family. In terms of assembly, homohexamer. Prenylated FMN is required as a cofactor. The cofactor is Mn(2+).

It localises to the cell membrane. It catalyses the reaction a 4-hydroxy-3-(all-trans-polyprenyl)benzoate + H(+) = a 2-(all-trans-polyprenyl)phenol + CO2. Its pathway is cofactor biosynthesis; ubiquinone biosynthesis. In terms of biological role, catalyzes the decarboxylation of 3-octaprenyl-4-hydroxy benzoate to 2-octaprenylphenol, an intermediate step in ubiquinone biosynthesis. In Shewanella sediminis (strain HAW-EB3), this protein is 3-octaprenyl-4-hydroxybenzoate carboxy-lyase.